We begin with the raw amino-acid sequence, 210 residues long: Thymidylate kinase (210 aa).

D17 serves as a coordination point for dGMP. D17 is a binding site for dTMP. The ATP site is built by R18, S19, G20, K21, S22, and T23. DTMP is bound by residues R47, F74, R78, R99, and Y107. Positions 74, 78, 99, 107, 108, and 153 each coordinate dGMP. Residues 143–155 (QNRSDYGEEIYEK) are LID. Position 182 (R182) interacts with ATP.

It belongs to the thymidylate kinase family. As to quaternary structure, homodimer. Binds two dTMP molecules per dimer. Binds only one dTGP molecule per dimer.

It catalyses the reaction dTMP + ATP = dTDP + ADP. The enzyme catalyses dGMP + ATP = dGDP + ADP. The protein operates within pyrimidine metabolism; dTTP biosynthesis. Its activity is regulated as follows. Inhibited by deoxyguanosine (dG), deoxythymidine (dT) and azidothymidine (AZT). In terms of biological role, catalyzes the phosphorylation of thymidine monophosphate (dTMP) to thymidine diphosphate (dTDP), the immediate precursor for the DNA building block dTTP. Can also phosphorylate dGMP and to a lesser extent GMP, dUMP and dIMP. Can use either ATP or dATP as phosphate donors in presence of Mg(2+). This chain is Thymidylate kinase, found in Plasmodium falciparum (isolate 3D7).